The chain runs to 313 residues: Protoheme IX farnesyltransferase (313 aa).

9 consecutive transmembrane segments (helical) span residues 33–53, 59–79, 107–127, 129–149, 162–182, 188–208, 212–232, 252–272, and 292–312; these read IALM…PVML, MPSW…AGSA, VEPA…TLMF, LLVN…YVFV, IVIG…AVTG, AVLL…ALAI, DDYA…EVVT, VADI…WFVA, and LFHM…AAAL.

This sequence belongs to the UbiA prenyltransferase family. Protoheme IX farnesyltransferase subfamily.

It is found in the cell membrane. It carries out the reaction heme b + (2E,6E)-farnesyl diphosphate + H2O = Fe(II)-heme o + diphosphate. It functions in the pathway porphyrin-containing compound metabolism; heme O biosynthesis; heme O from protoheme: step 1/1. Converts heme B (protoheme IX) to heme O by substitution of the vinyl group on carbon 2 of heme B porphyrin ring with a hydroxyethyl farnesyl side group. The sequence is that of Protoheme IX farnesyltransferase from Parafrankia sp. (strain EAN1pec).